A 129-amino-acid chain; its full sequence is Virion-associated protein (129 aa).

2 coiled-coil regions span residues 1–31 and 38–59; these read MANLNQIQKEVSEILSDQKSMKADIKAILEL and IKESLETVAAKIVNDLTKLIND. Residues 122-129 form a capsid binding region; sequence PAGWPNQF.

This sequence belongs to the caulimovirus ORF III family. As to quaternary structure, homotetramer, through coiled-coil domain. Homotrimer when bound on icosehadral capsid. Interacts with capsid protein, and with movement protein.

It localises to the virion. The protein resides in the host cell junction. Its subcellular location is the host plasmodesma. Its function is as follows. Plays a role in virus cell-to-cell and plant-to-plant transmission. Interacts with virion icosahedral capsid and movement protein, thereby facilitating virion cell-to-cell transmission through plasmodesmata opened by viral movement protein. Also interacts with aphid transmission factor, attaching the virion to aphid stylet when the animal feeds on an virus infected plant. Aphid saliva may later detach the virion, inducing release of infectious particles when the animal feeds on a new plant. In Cauliflower mosaic virus (strain Strasbourg) (CaMV), this protein is Virion-associated protein.